We begin with the raw amino-acid sequence, 196 residues long: Probable GTP-binding protein EngB (196 aa).

In terms of domain architecture, EngB-type G spans 24 to 196; sequence ELSEVALSGR…IWNLIEPYIS (173 aa). Residues 32-39, 59-63, 77-80, 144-147, and 176-178 contribute to the GTP site; these read GRSNVGKS, GKTQT, DVPG, TKED, and YSS. Mg(2+) is bound by residues S39 and T61.

This sequence belongs to the TRAFAC class TrmE-Era-EngA-EngB-Septin-like GTPase superfamily. EngB GTPase family. It depends on Mg(2+) as a cofactor.

In terms of biological role, necessary for normal cell division and for the maintenance of normal septation. The chain is Probable GTP-binding protein EngB from Staphylococcus aureus (strain MRSA252).